The primary structure comprises 246 residues: Probable transcriptional regulatory protein KPK_1906 (246 aa).

This sequence belongs to the TACO1 family.

The protein localises to the cytoplasm. The chain is Probable transcriptional regulatory protein KPK_1906 from Klebsiella pneumoniae (strain 342).